Consider the following 703-residue polypeptide: Polyribonucleotide nucleotidyltransferase (703 aa).

Positions 488 and 494 each coordinate Mg(2+). The KH domain occupies 555–614 (PRLYVMKINPEKIRDVIGKGGAVIRALTEETGTQINIEEDGTITIASNDSAKADEAKRRI). The 69-residue stretch at 624-692 (GKVYEGAITK…EKGRVKLSMK (69 aa)) folds into the S1 motif domain.

This sequence belongs to the polyribonucleotide nucleotidyltransferase family. Mg(2+) serves as cofactor.

It localises to the cytoplasm. It carries out the reaction RNA(n+1) + phosphate = RNA(n) + a ribonucleoside 5'-diphosphate. Involved in mRNA degradation. Catalyzes the phosphorolysis of single-stranded polyribonucleotides processively in the 3'- to 5'-direction. The chain is Polyribonucleotide nucleotidyltransferase from Polaromonas naphthalenivorans (strain CJ2).